The primary structure comprises 94 residues: Integration host factor subunit beta (94 aa).

Belongs to the bacterial histone-like protein family. In terms of assembly, heterodimer of an alpha and a beta chain.

Its function is as follows. This protein is one of the two subunits of integration host factor, a specific DNA-binding protein that functions in genetic recombination as well as in transcriptional and translational control. This chain is Integration host factor subunit beta, found in Brucella anthropi (strain ATCC 49188 / DSM 6882 / CCUG 24695 / JCM 21032 / LMG 3331 / NBRC 15819 / NCTC 12168 / Alc 37) (Ochrobactrum anthropi).